The primary structure comprises 433 residues: MGLTSKLEKLKLKELTGHEAAVKSNVVNGADTDDTDDIDEMDNEGQSILMGIIAQLRPGMDLSRITLPTFILEKKSMLERITNFFQIPDMLLKANRTSDDVERFVSVLAWYLASWHIAPKAVKKPLNPVLGETFNCYWENISDDCSAYYISEQVSHHPPKSSYFYLVPEAKIKVDGILIPKSRFLGNSSAAMMEGWAHLTLGEHENEVYEMNQPNVYCRGILFGKMKMELGDHMYVKCRKTGLEADIDFKTKGFISGTYDAIEGVIKNSKTSEVLYQITGKWNEVMEIKDLKTGKKRVLVDTKSSVPVKPRVRPLEEQGQYESRKLWKPTIDALARRDHTVATEEKFAVEDEQRNLAKKRIDDGVEFHPKFFRPVNEKEVELQDLEYVIYKKFDLKSNPEVLTDEVLSIAPILPGQKHDEKFEIPAFKKHEET.

Belongs to the OSBP family.

This chain is Oxysterol-binding protein-like protein OBPa (OBPA), found in Candida albicans (strain SC5314 / ATCC MYA-2876) (Yeast).